A 565-amino-acid polypeptide reads, in one-letter code: MRRRRKTVVVAVVIRRVLIWAICVMTLLCFLTVHIYVAPFNRLPKLHLNHHNTRRGYIIDYNKSITEQSLTRNLSRPESNEIPLISNPKTNEIQYQSSISEHINNTELVPPHVSTSPSSSSKLNITSGIPDFDKLWKHPPNRNFVPCVSPNPSYTSPLESRGYLLVHTNGGLNQMRAGICDMVAIARIINATLVVPELDKRSFWQDTSKFSDVFDEDHFINALSKDIRVIKKLPKGIDGLTKVVKHFKSYSGLSYYQNEIASMWDEYKVIRAAKSDSRLANNNLPPDIQKLRCRACYEALRFSTKIRSMGELLVDRMRSYGLYIALHLRFEKEMLAFSGCNHGLSASEAAELRRIRKNTAYWKVKDIDGRVQRLKGYCPLTPKEVGILLTALGYSSDTPVYIAAGEIYGGESRLADLRSRFSMLMSKEKLATREELKTFMNHSTQMAALDYIVSIESDVFIPSYSGNMARAVEGHRRFLGHRKTISPDRKAIVRLVDRIGRGAEKDNRKVYERINEIHKTRQGSPRRRKGPASGTKGLERHRSEESFYENPLPDCLCQRDPSKAR.

A helical; Signal-anchor for type II membrane protein transmembrane segment spans residues 17-37; the sequence is VLIWAICVMTLLCFLTVHIYV. 5 N-linked (GlcNAc...) asparagine glycosylation sites follow: Asn-62, Asn-73, Asn-104, Asn-124, and Asn-190. Residue 327–329 coordinates substrate; that stretch reads HLR. Asn-441 carries an N-linked (GlcNAc...) asparagine glycan. A disordered region spans residues 515–565; that stretch reads NEIHKTRQGSPRRRKGPASGTKGLERHRSEESFYENPLPDCLCQRDPSKAR. A compositionally biased stretch (basic residues) spans 520-530; that stretch reads TRQGSPRRRKG.

Belongs to the glycosyltransferase GT106 family.

The protein localises to the membrane. Its pathway is glycan metabolism. The sequence is that of O-fucosyltransferase 7 from Arabidopsis thaliana (Mouse-ear cress).